The primary structure comprises 400 residues: Elongation factor Tu (400 aa).

In terms of domain architecture, tr-type G spans 10–208; the sequence is KPHLNVGTIG…TMDSYFPEPQ (199 aa). Positions 19-26 are G1; sequence GHIDHGKT. Residue 19 to 26 participates in GTP binding; the sequence is GHIDHGKT. Thr26 contacts Mg(2+). The tract at residues 60–64 is G2; it reads GITIN. Residues 81–84 are G3; that stretch reads DCPG. Residues 81–85 and 136–139 contribute to the GTP site; these read DCPGH and NKTD. Residues 136–139 form a G4 region; that stretch reads NKTD. Residues 174–176 are G5; the sequence is SAL.

This sequence belongs to the TRAFAC class translation factor GTPase superfamily. Classic translation factor GTPase family. EF-Tu/EF-1A subfamily. Monomer.

It localises to the cytoplasm. It carries out the reaction GTP + H2O = GDP + phosphate + H(+). Its function is as follows. GTP hydrolase that promotes the GTP-dependent binding of aminoacyl-tRNA to the A-site of ribosomes during protein biosynthesis. The protein is Elongation factor Tu of Thermosipho africanus (strain TCF52B).